The primary structure comprises 392 residues: Probable protein phosphatase 2C 78 (392 aa).

The region spanning 39–342 (ASGEYSIAVA…DDITVVVVYL (304 aa)) is the PPM-type phosphatase domain. Mn(2+) contacts are provided by Asp-73, Gly-74, Asp-274, and Asp-333.

The protein belongs to the PP2C family. Mg(2+) is required as a cofactor. Requires Mn(2+) as cofactor.

The enzyme catalyses O-phospho-L-seryl-[protein] + H2O = L-seryl-[protein] + phosphate. It catalyses the reaction O-phospho-L-threonyl-[protein] + H2O = L-threonyl-[protein] + phosphate. The protein is Probable protein phosphatase 2C 78 of Oryza sativa subsp. japonica (Rice).